We begin with the raw amino-acid sequence, 845 residues long: Lon protease (845 aa).

Residues Met-45 to Leu-242 enclose the Lon N-terminal domain. Gly-393–Thr-400 serves as a coordination point for ATP. The region spanning Asn-629 to Glu-811 is the Lon proteolytic domain. Active-site residues include Ser-717 and Lys-760.

The protein belongs to the peptidase S16 family. Homohexamer. Organized in a ring with a central cavity.

It is found in the cytoplasm. It carries out the reaction Hydrolysis of proteins in presence of ATP.. In terms of biological role, ATP-dependent serine protease that mediates the selective degradation of mutant and abnormal proteins as well as certain short-lived regulatory proteins. Required for cellular homeostasis and for survival from DNA damage and developmental changes induced by stress. Degrades polypeptides processively to yield small peptide fragments that are 5 to 10 amino acids long. Binds to DNA in a double-stranded, site-specific manner. The sequence is that of Lon protease from Porphyromonas gingivalis (strain ATCC 33277 / DSM 20709 / CIP 103683 / JCM 12257 / NCTC 11834 / 2561).